Here is a 181-residue protein sequence, read N- to C-terminus: Peptidyl-tRNA hydrolase (181 aa).

Tyrosine 14 is a binding site for tRNA. The active-site Proton acceptor is histidine 19. TRNA is bound by residues tyrosine 62, asparagine 64, and asparagine 108.

This sequence belongs to the PTH family. Monomer.

It is found in the cytoplasm. It catalyses the reaction an N-acyl-L-alpha-aminoacyl-tRNA + H2O = an N-acyl-L-amino acid + a tRNA + H(+). Functionally, hydrolyzes ribosome-free peptidyl-tRNAs (with 1 or more amino acids incorporated), which drop off the ribosome during protein synthesis, or as a result of ribosome stalling. Catalyzes the release of premature peptidyl moieties from peptidyl-tRNA molecules trapped in stalled 50S ribosomal subunits, and thus maintains levels of free tRNAs and 50S ribosomes. This Campylobacter jejuni subsp. jejuni serotype O:2 (strain ATCC 700819 / NCTC 11168) protein is Peptidyl-tRNA hydrolase.